The chain runs to 281 residues: ATP synthase gamma chain (281 aa).

This sequence belongs to the ATPase gamma chain family. In terms of assembly, F-type ATPases have 2 components, CF(1) - the catalytic core - and CF(0) - the membrane proton channel. CF(1) has five subunits: alpha(3), beta(3), gamma(1), delta(1), epsilon(1). CF(0) has three main subunits: a, b and c.

It is found in the cell inner membrane. In terms of biological role, produces ATP from ADP in the presence of a proton gradient across the membrane. The gamma chain is believed to be important in regulating ATPase activity and the flow of protons through the CF(0) complex. The sequence is that of ATP synthase gamma chain from Ehrlichia chaffeensis (strain ATCC CRL-10679 / Arkansas).